The primary structure comprises 926 residues: Peripheral plasma membrane protein CASK (926 aa).

The Protein kinase domain maps to 12-276; that stretch reads YELCEVIGKG…VYEALNHPWL (265 aa). ATP-binding positions include 18–26 and lysine 41; that span reads IGKGPFSVV. Serine 51 bears the Phosphoserine mark. The active site involves aspartate 141. 2 positions are modified to phosphoserine; by autocatalysis: serine 151 and serine 155. Threonine 182 is modified (phosphothreonine). Lysine 192 and serine 313 each carry phosphoserine. A calmodulin-binding region spans residues 305 to 315; sequence KGAVLAAVSSH. L27 domains are found at residues 343-398 and 402-455; these read AERA…SPQI and PSDA…YSDE. A required for interaction with NRXN1 (via C-terminal tail) region spans residues 482 to 909; that stretch reads MENVTRVRLV…DETIRHLEEA (428 aa). A PDZ domain is found at 489–564; it reads RLVQFQKNTD…MLREMRGSIT (76 aa). Residues tyrosine 571 and serine 577 each carry the phosphoserine modification. A disordered region spans residues 574 to 610; it reads QSSSCERDSPSTSRQSPANGHSSTNNSVSDLPSTTQP. The 71-residue stretch at 612–682 folds into the SH3 domain; the sequence is GRQIYVRAQF…PSPELQEWRV (71 aa). The Guanylate kinase-like domain maps to 739–911; that stretch reads RKTLVLLGAH…TIRHLEEAVE (173 aa).

It in the N-terminal section; belongs to the protein kinase superfamily. CAMK Ser/Thr protein kinase family. CaMK subfamily. The protein belongs to the MAGUK family. In terms of assembly, CASK and LIN7 form two mutually exclusive tripartite complexes with APBA1 or CASKIN1. Component of the brain-specific heterotrimeric complex (LIN-10-LIN-2-LIN-7 complex) composed of at least APBA1, CASK, and LIN7, which associates with the motor protein KIF17 to transport vesicles along microtubules. Forms a heterotrimeric complex with DLG1 and LIN7B via their L27 domains. Identified in a complex with ACTN4, IQGAP1, MAGI2, NPHS1, SPTAN1 and SPTBN1. Part of a complex containing CASK, TBR1 and TSPYL2. Interacts with WHRN. Interacts (via the PDZ, SH3 and guanylate kinase-like domains) with NRXN1 (via C-terminus). Interacts with CASKIN1, APBA1, LIN7(A/B/C) and L27 domain of DLG1 and isoform 2 of DLG4. Interacts with FCHSD2. Interacts with KIRREL3. Interacts with TBR1. Interacts with TSPYL2. The cofactor is Unlike other protein kinases, does not require a divalent cation such as magnesium for catalytic activity.. As to expression, ubiquitous. Expression is significantly greater in brain relative to kidney, lung, and liver and in fetal brain and kidney relative to lung and liver.

It is found in the nucleus. It localises to the cytoplasm. The protein resides in the cell membrane. It catalyses the reaction L-seryl-[protein] + ATP = O-phospho-L-seryl-[protein] + ADP + H(+). The enzyme catalyses L-threonyl-[protein] + ATP = O-phospho-L-threonyl-[protein] + ADP + H(+). With respect to regulation, differs from archetypal CaMK members in that the kinase domain exhibits a constitutively active conformation and the autoinhibitory region does not engage in direct contact with the ATP-binding cleft, although it still binds Ca(2+)/CAM. Its function is as follows. Multidomain scaffolding Mg(2+)-independent protein kinase that catalyzes the phosphotransfer from ATP to proteins such as NRXN1, and plays a role in synaptic transmembrane protein anchoring and ion channel trafficking. Contributes to neural development and regulation of gene expression via interaction with the transcription factor TBR1. Binds to cell-surface proteins, including amyloid precursor protein, neurexins and syndecans. May mediate a link between the extracellular matrix and the actin cytoskeleton via its interaction with syndecan and with the actin/spectrin-binding protein 4.1. Component of the LIN-10-LIN-2-LIN-7 complex, which associates with the motor protein KIF17 to transport vesicles containing N-methyl-D-aspartate (NMDA) receptor subunit NR2B along microtubules. In Homo sapiens (Human), this protein is Peripheral plasma membrane protein CASK.